Here is a 280-residue protein sequence, read N- to C-terminus: Dimethylglycine N-methyltransferase (280 aa).

It belongs to the methyltransferase superfamily. As to quaternary structure, monomer.

The catalysed reaction is N,N-dimethylglycine + S-adenosyl-L-methionine = glycine betaine + S-adenosyl-L-homocysteine + H(+). The protein operates within amine and polyamine biosynthesis; betaine biosynthesis via glycine pathway; betaine from glycine: step 3/3. Functionally, catalyzes the methylation of dimethylglycine to betaine with S-adenosylmethionine (AdoMet) acting as the methyl donor. It has strict specificity for dimethylglycine as the methyl group acceptors. The chain is Dimethylglycine N-methyltransferase from Parasynechococcus marenigrum (strain WH8102).